The chain runs to 125 residues: Monothiol glutaredoxin-S2 (125 aa).

In terms of domain architecture, Glutaredoxin spans 28–124 (AERVGRLVRE…PRLREVGALC (97 aa)). Cys-48 is a [2Fe-2S] cluster binding site.

It belongs to the glutaredoxin family. CC-type subfamily.

The protein localises to the cytoplasm. In terms of biological role, may only reduce GSH-thiol disulfides, but not protein disulfides. In Oryza sativa subsp. japonica (Rice), this protein is Monothiol glutaredoxin-S2 (GRXS2).